The sequence spans 233 residues: Large ribosomal subunit protein uL1 (233 aa).

It belongs to the universal ribosomal protein uL1 family. In terms of assembly, part of the 50S ribosomal subunit.

In terms of biological role, binds directly to 23S rRNA. The L1 stalk is quite mobile in the ribosome, and is involved in E site tRNA release. Its function is as follows. Protein L1 is also a translational repressor protein, it controls the translation of the L11 operon by binding to its mRNA. This is Large ribosomal subunit protein uL1 from Laribacter hongkongensis (strain HLHK9).